Here is a 750-residue protein sequence, read N- to C-terminus: Alpha-galactosidase C (750 aa).

The N-terminal stretch at 1–26 (MFRSTATVAAATAMGLLTATGHGSLA) is a signal peptide. Residues N58, N162, N186, N194, N366, N428, N432, and N453 are each glycosylated (N-linked (GlcNAc...) asparagine). D511 (nucleophile) is an active-site residue. The active-site Proton donor is D573.

Belongs to the glycosyl hydrolase 36 family. Homotetramer. The cofactor is Mg(2+). NAD(+) serves as cofactor.

The protein resides in the secreted. It carries out the reaction Hydrolysis of terminal, non-reducing alpha-D-galactose residues in alpha-D-galactosides, including galactose oligosaccharides, galactomannans and galactolipids.. Hydrolyzes a variety of simple alpha-D-galactoside as well as more complex molecules such as oligosaccharides and polysaccharides. Active on paranitrophenyl-alpha-galactoside, raffinose, locust bean gum and gum guar. This chain is Alpha-galactosidase C (aglC), found in Emericella nidulans (strain FGSC A4 / ATCC 38163 / CBS 112.46 / NRRL 194 / M139) (Aspergillus nidulans).